A 492-amino-acid polypeptide reads, in one-letter code: G2/mitotic-specific cyclin CYB1 (492 aa).

The disordered stretch occupies residues 1–176; that stretch reads MPQVTKTNNE…QPEVGERSQS (176 aa). A compositionally biased stretch (polar residues) spans 23-33; that stretch reads QESISTIKNTT. Positions 34-58 are enriched in low complexity; it reads ISNSQHKQQTQQQISSPPQVSVTSS. The segment covering 59–83 has biased composition (polar residues); sequence EGVSHVNTRQYLGDVSNQYITNAKP. A compositionally biased stretch (low complexity) spans 111–135; the sequence is ASDNNNNGSTSSSSNSSNNNNNDAN.

It belongs to the cyclin family. Cyclin AB subfamily.

Its function is as follows. Essential for the control of the cell cycle at the G2/M (mitosis) transition. Interacts with the CDC2 protein kinase to form MPF. G2/M cyclins accumulate steadily during G2 and are abruptly destroyed at mitosis. The protein is G2/mitotic-specific cyclin CYB1 (CYB1) of Candida albicans (Yeast).